We begin with the raw amino-acid sequence, 250 residues long: Recombination protein RecR (250 aa).

Residues 56–71 (CRICHNISQEDVCRIC) form a C4-type zinc finger. The Toprim domain maps to 79–227 (SIICVVEESK…TVTRLASGIP (149 aa)). The segment at 148 to 172 (LGDADTPADGESSGADAAETGNAKT) is disordered.

Belongs to the RecR family.

Its function is as follows. May play a role in DNA repair. It seems to be involved in an RecBC-independent recombinational process of DNA repair. It may act with RecF and RecO. In Corynebacterium jeikeium (strain K411), this protein is Recombination protein RecR.